The chain runs to 303 residues: Thioesterase poxG (303 aa).

The protein belongs to the lcsJ thioesterase family.

It functions in the pathway secondary metabolite biosynthesis. Its function is as follows. Thioesterase; part of the gene cluster that mediates the biosynthesis of oxaleimides, cytotoxic compounds containing an unusual disubstituted succinimide moiety. The first step of the pathway is provided by the HR-PKS poxF that serves in a new mode of collaborative biosynthesis with the PKS-NRPS poxE, by providing the olefin containing amino acid substrate via the synthesis of an ACP-bound dec-4-enoate. The cytochrome P450 monooxygenase poxM-catalyzed oxidation at the alpha-position creates the enzyme-bound 2-hydroxydec-4-enoyl-ACP thioester, which may be prone to spontaneous hydrolysis to yield 2-hydroxydec-4-enoic acid due to increased electrophilicity of the carbonyl. 2-hydroxydec-4-enoic acid can then be further oxidized by poxM to yield the alpha-ketoacid 2-oxodec-4-enoicacid, which is reductively aminated by the aminotransferase poxL to yield (S,E)-2-aminodec-4-enoic acid. The Hybrid PKS-NRPS synthetase poxE then performs condensation between the octaketide product of its PKS modules and the amino group of (S,E)-2-aminodec-4-enoic acid which is activated and incorporated by the adenylation domain. The resulting aminoacyl product can be cyclized by the Diels-Alderase PoxQ and reductively released by the reductive (R) domain of poxE to yield an aldehyde intermediate. The released aldehyde is then substrate for a Knoevenagel condensation by the hydrolyase poxO followed by an oxidation at the 5-position of the pyrrolidone ring. The presence of the olefin from the amino acid building block allows for migration of the substituted allyl group to occur. This allylic transposition reaction takes place in a conjugate addition, semipinacol-like fashion to yield a succinimide intermediate. Iterative two-electron oxidations of the C7 methyl of the succinimide intermediate to the carboxylic acid can be catalyzed by one of two remaining cytochrome P450 monooxygenasess poxC or poxD to yield oxaleimide A. Subsequent oxidation yields the maleimide scaffold oxaleimide I. Both oxaleimide A and oxaleimide I can undergo oxidative modifications in the decalin ring to yield the series of products oxaleimides B to H. This is Thioesterase poxG from Penicillium oxalicum (strain 114-2 / CGMCC 5302) (Penicillium decumbens).